We begin with the raw amino-acid sequence, 354 residues long: Chorismate synthase (354 aa).

Positions 48 and 54 each coordinate NADP(+). FMN is bound by residues 125–127 (RSS), 238–239 (NA), G278, 293–297 (KPTSS), and R319.

The protein belongs to the chorismate synthase family. As to quaternary structure, homotetramer. It depends on FMNH2 as a cofactor.

The catalysed reaction is 5-O-(1-carboxyvinyl)-3-phosphoshikimate = chorismate + phosphate. It participates in metabolic intermediate biosynthesis; chorismate biosynthesis; chorismate from D-erythrose 4-phosphate and phosphoenolpyruvate: step 7/7. Its function is as follows. Catalyzes the anti-1,4-elimination of the C-3 phosphate and the C-6 proR hydrogen from 5-enolpyruvylshikimate-3-phosphate (EPSP) to yield chorismate, which is the branch point compound that serves as the starting substrate for the three terminal pathways of aromatic amino acid biosynthesis. This reaction introduces a second double bond into the aromatic ring system. This chain is Chorismate synthase, found in Blochmanniella pennsylvanica (strain BPEN).